The chain runs to 396 residues: Argininosuccinate synthase (396 aa).

9 to 17 is a binding site for ATP; it reads AYSGGLDTS. Tyrosine 85 is an L-citrulline binding site. Position 115 (glycine 115) interacts with ATP. Threonine 117, asparagine 121, and aspartate 122 together coordinate L-aspartate. Position 121 (asparagine 121) interacts with L-citrulline. The L-citrulline site is built by arginine 125, serine 173, glutamate 258, and tyrosine 270.

It belongs to the argininosuccinate synthase family. Type 1 subfamily. As to quaternary structure, homotetramer.

Its subcellular location is the cytoplasm. It carries out the reaction L-citrulline + L-aspartate + ATP = 2-(N(omega)-L-arginino)succinate + AMP + diphosphate + H(+). The protein operates within amino-acid biosynthesis; L-arginine biosynthesis; L-arginine from L-ornithine and carbamoyl phosphate: step 2/3. The protein is Argininosuccinate synthase of Streptococcus agalactiae serotype III (strain NEM316).